We begin with the raw amino-acid sequence, 927 residues long: Protein unc-45 homolog B (927 aa).

TPR repeat units lie at residues 4 to 37, 41 to 74, and 76 to 108; these read PVQLKEEGNKYFQSNEYGQAIQCYSKALKLITDK, AVLYRNRSACYLKQDNYVQAAADASKAIDVDASD, and KALFRRCQALEKLGKLDQAYKDVQRCATLEPKN. ARM repeat units follow at residues 167–206, 209–248, and 746–785; these read DAGAEQIFQNNGVNLLMQLIESKDPEMILSAIRTLSGMCT, RARATAIVHLVGINKICSIMAVDNEEIALAACNLLQNIVD, and DKLRQKIIKEKALPEIENYMFENHEQIRQAATECMCNLAL.

Detected initially throughout the somites and the heart and gradually also expressed in the jaw, branchial arches and body wall muscles at later embryonic stages.

Its subcellular location is the cytoplasm. The protein resides in the myofibril. It is found in the sarcomere. It localises to the z line. The protein localises to the a band. Its subcellular location is the perinuclear region. The protein resides in the cytosol. In terms of biological role, acts as a co-chaperone for HSP90 and is required for proper folding of the myosin motor domain. Plays a role in sarcomere formation during muscle cell development. Is necessary for normal early lens development. The sequence is that of Protein unc-45 homolog B from Xenopus tropicalis (Western clawed frog).